A 632-amino-acid chain; its full sequence is 2-hydroxyacyl-CoA lyase 2 (632 aa).

Residues Phe13 to Ala33 traverse the membrane as a helical segment. Glu98 provides a ligand contact to thiamine diphosphate. At Ser369 the chain carries Phosphoserine. The tract at residues Asp470–Gly550 is thiamine pyrophosphate binding. Mg(2+) is bound by residues Asp521 and Asn547.

It belongs to the TPP enzyme family. It depends on Mg(2+) as a cofactor. The cofactor is thiamine diphosphate.

It localises to the endoplasmic reticulum membrane. The enzyme catalyses 2-hydroxyoctadecanoyl-CoA = heptadecanal + formyl-CoA. The catalysed reaction is (2R)-hydroxyhexadecanoyl-CoA = pentadecanal + formyl-CoA. Functionally, endoplasmic reticulum 2-OH acyl-CoA lyase involved in the cleavage (C1 removal) reaction in the fatty acid alpha-oxydation in a thiamine pyrophosphate (TPP)-dependent manner. Involved in the phytosphingosine degradation pathway. This Mus musculus (Mouse) protein is 2-hydroxyacyl-CoA lyase 2 (Ilvbl).